The chain runs to 400 residues: PHD finger protein 24 (400 aa).

G2 carries the N-myristoyl glycine lipid modification. Basic and acidic residues predominate over residues 28 to 38 (LRDRPSIRRTG). A disordered region spans residues 28-99 (LRDRPSIRRT…PEEFDRTSRF (72 aa)). At R36 the chain carries Omega-N-methylarginine. Residue S43 is modified to Phosphoserine. T47 is subject to Phosphothreonine. A Phosphoserine modification is found at S51. The segment covering 78–97 (AWERLRDGRGVEPEEFDRTS) has biased composition (basic and acidic residues). Residues 129–190 (NDEMCDVCEV…TGWSCHYCDN (62 aa)) form a PHD-type zinc finger.

The chain is PHD finger protein 24 from Homo sapiens (Human).